The following is a 281-amino-acid chain: Lectin CaBo (281 aa).

An N-terminal signal peptide occupies residues 1–29 (MAISKKSSLYLPIFTFITMLLMVVNKVSS). Aspartate 119 contacts Ca(2+). Arginine 139 is a binding site for a carbohydrate. Residues 149–163 (IIKNSTTIDFNAAYN) constitute a propeptide, removed in mature form. Positions 171 and 173 each coordinate Mn(2+). 4 residues coordinate Ca(2+): aspartate 173, tyrosine 175, asparagine 177, and aspartate 182. A carbohydrate is bound at residue tyrosine 175. Residues aspartate 182 and histidine 187 each coordinate Mn(2+). An a carbohydrate-binding site is contributed by 262 to 263 (LY).

It belongs to the leguminous lectin family. Equilibrium between homodimer and homotetramer. In terms of processing, the mature chain consists of residues 164-281 followed by residues 30-148. Concanavalin A-like lectins of the Diocleinae subtribe undergo proteolytic processing referred to as circular permutation. The propeptide is split into an N-terminal and a C-terminal part, the gamma and beta chain, respectively. These are then religated in beta-gamma order to form the mature alpha chain. The beta and gamma chains can often be detected in cell extracts.

Functionally, D-mannose-specific lectin. This Canavalia bonariensis protein is Lectin CaBo.